Reading from the N-terminus, the 1089-residue chain is GPI ethanolamine phosphate transferase 3, catalytic subunit (1089 aa).

A helical transmembrane segment spans residues Ala4–Phe24. Asn268 is a glycosylation site (N-linked (GlcNAc...) asparagine). The next 13 membrane-spanning stretches (helical) occupy residues Leu457–Phe477, Leu482–Gly502, Leu510–Trp530, Thr541–Phe561, Phe575–Leu595, Leu668–Leu688, Met701–Leu721, Val747–Val767, Ser830–Leu850, Leu857–Ile877, Phe944–Cys964, Leu1014–Leu1034, and Phe1048–Leu1068.

It belongs to the PIGG/PIGN/PIGO family. PIGO subfamily. Part of the ethanolamine phosphate transferase 3 complex composed by PIGO and PIGF. PIGF is required to stabilize PIGO.

It is found in the endoplasmic reticulum membrane. Its pathway is glycolipid biosynthesis; glycosylphosphatidylinositol-anchor biosynthesis. Catalytic subunit of the ethanolamine phosphate transferase 3 complex that transfers an ethanolamine phosphate (EtNP) from a phosphatidylethanolamine (PE) to the 6-OH position of the third alpha-1,2-linked mannose of an alpha-D-Man-(1-&gt;2)-alpha-D-Man-(1-&gt;6)-2-PEtn-alpha-D-Man-(1-&gt;4)-alpha-D-GlcN-(1-&gt;6)-(1-radyl,2-acyl-sn-glycero-3-phospho)-2-acyl-inositol (also termed H6) intermediate to generate a 6-PEtn-alpha-D-Man-(1-&gt;2)-alpha-D-Man-(1-&gt;6)-2-PEtn-alpha-D-Man-(1-&gt;4)-alpha-D-GlcN-(1-&gt;6)-(1-radyl,2-acyl-sn-glycero-3-phospho)-2-acyl-inositol (also termed H7) and participates in the tenth step of the glycosylphosphatidylinositol-anchor biosynthesis. The protein is GPI ethanolamine phosphate transferase 3, catalytic subunit of Homo sapiens (Human).